The chain runs to 272 residues: NADPH-dependent 7-cyano-7-deazaguanine reductase (272 aa).

Position 80–82 (80–82 (VES)) interacts with substrate. 82-83 (SK) lines the NADPH pocket. Cys-178 acts as the Thioimide intermediate in catalysis. The Proton donor role is filled by Asp-185. 217–218 (AE) provides a ligand contact to substrate. 246–247 (RG) provides a ligand contact to NADPH.

The protein belongs to the GTP cyclohydrolase I family. QueF type 2 subfamily. Homodimer.

Its subcellular location is the cytoplasm. The catalysed reaction is 7-aminomethyl-7-carbaguanine + 2 NADP(+) = 7-cyano-7-deazaguanine + 2 NADPH + 3 H(+). The protein operates within tRNA modification; tRNA-queuosine biosynthesis. Functionally, catalyzes the NADPH-dependent reduction of 7-cyano-7-deazaguanine (preQ0) to 7-aminomethyl-7-deazaguanine (preQ1). In Rickettsia typhi (strain ATCC VR-144 / Wilmington), this protein is NADPH-dependent 7-cyano-7-deazaguanine reductase.